The following is a 409-amino-acid chain: Accessory Sec system protein translocase subunit SecY2 (409 aa).

10 helical membrane passes run 16–36 (ILITFSLIIIFLLGRYVPIPG), 61–81 (LSQVGVFSLGIGPMMTTMILL), 104–124 (VVMLVIAIIQGLAIAISFQYH), 132–152 (LLLATMILVTGAYIISWIGNL), 161–181 (MTILVVVGMLVGQFNNIPLIF), 190–210 (LAIILFLLWTLVAMYLMITFE), 242–262 (GMAFMYVYTLLMFPQYIIILL), 286–306 (GVVIYMILMLVLSVAFTFVNI), 341–361 (LFGTFSGFFMAFLGGVPLLFA), and 374–394 (TGIFMMITGMSFMILDEFQVI).

It belongs to the SecY/SEC61-alpha family. SecY2 subfamily. As to quaternary structure, component of the accessory SecA2/SecY2 protein translocase complex required to export cell wall proteins. May form heterotrimers with SecE and SecG subunits.

The protein resides in the cell membrane. Functionally, part of the accessory SecA2/SecY2 system specifically required for export of possible cell wall proteins. The central subunit of a protein translocation channel. This Streptococcus agalactiae serotype Ia (strain ATCC 27591 / A909 / CDC SS700) protein is Accessory Sec system protein translocase subunit SecY2.